The sequence spans 128 residues: MSDFEVPPKAKGFKRLFKALFYSKDGLKCAWIEESAFRQIVILALFCIVLASYLAKDFLEWGLLILPCFLSVVVELINSSIEKAVDFTGTEFHPLAKKAKDMASAAQLIGLIFWTLIWGRYLLALYLK.

A divalent metal cation is bound at residue E34. 2 helical membrane-spanning segments follow: residues 35–55 (SAFR…SYLA) and 58–78 (FLEW…ELIN). Catalysis depends on E75, which acts as the Proton acceptor. Position 82 (E82) interacts with a divalent metal cation. Residues 107-127 (QLIGLIFWTLIWGRYLLALYL) traverse the membrane as a helical segment.

The protein belongs to the bacterial diacylglycerol kinase family. Mg(2+) serves as cofactor.

It localises to the cell inner membrane. The catalysed reaction is a 1,2-diacyl-sn-glycerol + ATP = a 1,2-diacyl-sn-glycero-3-phosphate + ADP + H(+). Its function is as follows. Catalyzes the ATP-dependent phosphorylation of sn-l,2-diacylglycerol (DAG) to phosphatidic acid. Involved in the recycling of diacylglycerol produced as a by-product during membrane-derived oligosaccharide (MDO) biosynthesis. This chain is Diacylglycerol kinase (dgkA), found in Helicobacter pylori (strain ATCC 700392 / 26695) (Campylobacter pylori).